Consider the following 403-residue polypeptide: GPI-N-acetylgalactosamine transferase PGAP4 (403 aa).

At 1–22 (MSTSTSPAAMLLRRLRRLSWGS) the chain is on the cytoplasmic side. The chain crosses the membrane as a helical span at residues 23 to 43 (TAVQLFILTVVTFGLLAPLAC). The Lumenal portion of the chain corresponds to 44–259 (HRLLHSYFYL…RLQHYTNPEP (216 aa)). Val-109 is a UDP-N-acetyl-alpha-D-galactosamine binding site. 2 disulfides stabilise this stretch: Cys-132/Cys-136 and Cys-144/Cys-194. The DXD motif signature appears at 211-213 (EDD). Residues 260–280 (MRILEWVGVGMLLGPLLTWIY) traverse the membrane as a helical segment. Over 281-287 (MRFASRP) the chain is Cytoplasmic. The helical transmembrane segment at 288 to 308 (GFSWPVMLFFSLYSMGLVELV) threads the bilayer. The Lumenal portion of the chain corresponds to 309–403 (GRHYFLELRR…LRYNFHPSLL (95 aa)). Cys-332 and Cys-333 are disulfide-bonded. Thr-334, Pro-335, and Lys-362 together coordinate UDP-N-acetyl-alpha-D-galactosamine.

This sequence belongs to the PGAP4 family. Post-translationally, glycosylated.

Its subcellular location is the golgi apparatus membrane. In terms of biological role, golgi-resident glycosylphosphatidylinositol (GPI)-N-acetylgalactosamine transferase that catalyzes the N-acetyl-beta-D-galactosamine transfer from an UDP-N-acetyl-alpha-D-galactosamine to the 4-OH-position of first mannose of the glycosylphosphatidylinositol (GPI) of a GPI-anchored protein (GPI-AP). This modification occurs after the fatty acid remodeling step of the GPI-anchor maturation. This chain is GPI-N-acetylgalactosamine transferase PGAP4, found in Pongo abelii (Sumatran orangutan).